The following is a 904-amino-acid chain: MICAL-like protein 2 (904 aa).

In terms of domain architecture, Calponin-homology (CH) spans methionine 1–histidine 107. Positions methionine 1 to proline 260 are forms an intramolecular interaction with the C-terminal coiled coil domain keeping the protein in a closed conformation. Phosphoserine occurs at positions 110, 143, and 153. A disordered region spans residues glycine 117–alanine 178. Pro residues predominate over residues serine 143–serine 153. An LIM zinc-binding domain is found at serine 186–alanine 248. Phosphoserine is present on serine 249. Residues lysine 251 to glutamate 722 form a disordered region. Residues glycine 261 to glutamine 388 form a necessary and sufficient for interaction with actinins region. The tract at residues glycine 261–glutamate 697 is mediates targeting to the cell plasma membrane. The segment covering serine 267–glutamine 277 has biased composition (polar residues). 2 stretches are compositionally biased toward low complexity: residues asparagine 293 to valine 314 and serine 349 to proline 362. Serine 294 carries the phosphoserine modification. Residues alanine 363–alanine 374 are compositionally biased toward pro residues. The span at alanine 385–threonine 400 shows a compositional bias: low complexity. Polar residues predominate over residues proline 408–serine 433. The segment covering alanine 459–alanine 480 has biased composition (low complexity). 2 positions are modified to phosphoserine: serine 494 and serine 504. Composition is skewed to low complexity over residues leucine 520–alanine 534 and serine 542–arginine 553. Over residues lysine 564–glutamate 578 the composition is skewed to polar residues. Residues proline 593–arginine 622 are compositionally biased toward basic and acidic residues. Serine 598 carries the post-translational modification Phosphoserine. The residue at position 644 (threonine 644) is a Phosphothreonine. Residues proline 647–proline 661 show a composition bias toward pro residues. Serine 649, serine 658, serine 660, and serine 726 each carry phosphoserine. Residues glutamate 698 to leucine 807 are forms an intramolecular interaction with the N-terminal Calponin-homology and LIM zinc-binding domains-containing region keeping the protein in a closed conformation. The 152-residue stretch at threonine 723–aspartate 874 folds into the bMERB domain. The stretch at leucine 735–aspartate 771 forms a coiled coil. The interval leucine 807–serine 903 is mediates interaction with RAB13 and is required for transition from the closed to the opened conformation.

In terms of assembly, interacts with RAB13 (GTP-bound form); competes with RAB8A and is involved in tight junctions assembly. Interacts with RAB8A; competes with RAB13 and is involved in E-cadherin endocytic recycling. Interacts with RAB8B. Interacts (preferentially in opened conformation) with ACTN1 and ACTN4; stimulated by RAB13 activation. Interacts (via calponin-homology (CH) domain) with the filamins FLNA, FLNB and FLNC (via actin-binding domain).

It localises to the cell membrane. It is found in the cell junction. The protein localises to the tight junction. Its subcellular location is the recycling endosome. The protein resides in the cell projection. It localises to the cytoplasm. It is found in the cytoskeleton. Functionally, effector of small Rab GTPases which is involved in junctional complexes assembly through the regulation of cell adhesion molecules transport to the plasma membrane and actin cytoskeleton reorganization. Regulates the endocytic recycling of occludins, claudins and E-cadherin to the plasma membrane and may thereby regulate the establishment of tight junctions and adherens junctions. In parallel, may regulate actin cytoskeleton reorganization directly through interaction with F-actin or indirectly through actinins and filamins. Most probably involved in the processes of epithelial cell differentiation, cell spreading and neurite outgrowth. Undergoes liquid-liquid phase separation to form tubular recycling endosomes. Plays 2 sequential roles in the biogenesis of tubular recycling endosomes: first organizes phase separation and then the closed form formed by interaction with RAB8A promotes endosomal tubulation. The protein is MICAL-like protein 2 of Homo sapiens (Human).